We begin with the raw amino-acid sequence, 286 residues long: MANAKEIKTKIASVKNTQKITSAMEMVAASKMRRAQDRMAASRPYAENMRKVIGHVAQGSLEYKHPYLEVREAKRVGYIVVSTDRGLCGGLNVNLFKKVIADVKKQREAGAEVEFCTIGARSAQFFNSFGGQVSASASGLGDAPKLVDLIGTVRVMLEAYNEGKLDRLYVVFNKFVNTMAQTPVIEQLLPLPKSEEGEFTHQWDYIYEPDPKLLLDTLLVRFVESQVYQGVVENIASEQAARMVAMKAATDNAGELIDDLQLVYNKARQAAITQELSEIVAGAAAV.

Belongs to the ATPase gamma chain family. In terms of assembly, F-type ATPases have 2 components, CF(1) - the catalytic core - and CF(0) - the membrane proton channel. CF(1) has five subunits: alpha(3), beta(3), gamma(1), delta(1), epsilon(1). CF(0) has three main subunits: a, b and c.

The protein localises to the cell inner membrane. Functionally, produces ATP from ADP in the presence of a proton gradient across the membrane. The gamma chain is believed to be important in regulating ATPase activity and the flow of protons through the CF(0) complex. This is ATP synthase gamma chain from Shewanella halifaxensis (strain HAW-EB4).